A 654-amino-acid polypeptide reads, in one-letter code: Kelch-like protein 13 (654 aa).

The BTB domain maps to 91 to 160 (CDVTLMPGDT…IYTAKLSLNM (70 aa)). Residues 195 to 296 (CVEVGRIANT…TPQELINYVQ (102 aa)) enclose the BACK domain. Kelch repeat units follow at residues 340–388 (RLVT…VIGN), 389–440 (FLYV…ALKG), 441–487 (FLYA…VYGG), 489–534 (MYIS…TVGD), 536–586 (LYVI…VFEN), and 587–635 (KIYV…TLTV).

As to quaternary structure, component of the BCR(KLHL9-KLHL13) E3 ubiquitin ligase complex, at least composed of CUL3, KLHL9, KLHL13 and RBX1. Interacts with AURKB.

The protein operates within protein modification; protein ubiquitination. In terms of biological role, substrate-specific adapter of a BCR (BTB-CUL3-RBX1) E3 ubiquitin-protein ligase complex required for mitotic progression and cytokinesis. The BCR(KLHL9-KLHL13) E3 ubiquitin ligase complex mediates the ubiquitination of AURKB and controls the dynamic behavior of AURKB on mitotic chromosomes and thereby coordinates faithful mitotic progression and completion of cytokinesis. This Mus musculus (Mouse) protein is Kelch-like protein 13 (Klhl13).